A 193-amino-acid chain; its full sequence is Thioredoxin reductase-like selenoprotein T1b (193 aa).

The first 21 residues, 1–21 (METRCLYLLLVCVLSVNHATA), serve as a signal peptide directing secretion. Residues 44–47 (CVSU) constitute a cross-link (cysteinyl-selenocysteine (Cys-Sec)). A non-standard amino acid (selenocysteine) is located at residue Sec47.

This sequence belongs to the SelWTH family. Selenoprotein T subfamily. Post-translationally, may contain a selenide-sulfide bond between Cys-44 and Sec-47. This bond is speculated to serve as redox-active pair. Widely expressed in the embryo. High level in embryonic blood at 24 hours post-fertilization (hpf).

Its subcellular location is the endoplasmic reticulum membrane. It catalyses the reaction [thioredoxin]-dithiol + NADP(+) = [thioredoxin]-disulfide + NADPH + H(+). In terms of biological role, selenoprotein with thioredoxin reductase-like oxidoreductase activity. This is Thioredoxin reductase-like selenoprotein T1b from Danio rerio (Zebrafish).